A 293-amino-acid chain; its full sequence is uncharacterized protein (293 aa).

Disordered regions lie at residues 1–23 (MGWPPAQKPEDSKEEHGGPAQTD) and 52–83 (ELQSYSHTSESPVETKTPTTSSEEQDEQSELS). Residues 8–17 (KPEDSKEEHG) are compositionally biased toward basic and acidic residues. Positions 52 to 71 (ELQSYSHTSESPVETKTPTT) are enriched in polar residues.

This is an uncharacterized protein from Mus musculus (Mouse).